Here is a 439-residue protein sequence, read N- to C-terminus: Xylose isomerase (439 aa).

Catalysis depends on residues H101 and D104. Residues E232, E268, H271, D296, D307, D309, and D339 each contribute to the Mg(2+) site.

This sequence belongs to the xylose isomerase family. In terms of assembly, homotetramer. The cofactor is Mg(2+).

It localises to the cytoplasm. It carries out the reaction alpha-D-xylose = alpha-D-xylulofuranose. This Yersinia pseudotuberculosis serotype O:1b (strain IP 31758) protein is Xylose isomerase.